Here is a 210-residue protein sequence, read N- to C-terminus: Na(+)-translocating NADH-quinone reductase subunit D (210 aa).

6 helical membrane-spanning segments follow: residues Val42 to Ile62, Ile66 to Val86, Val103 to Met123, Phe131 to Phe151, Leu154 to Trp174, and Asn178 to Val198.

Belongs to the NqrDE/RnfAE family. As to quaternary structure, composed of six subunits; NqrA, NqrB, NqrC, NqrD, NqrE and NqrF.

It is found in the cell inner membrane. The enzyme catalyses a ubiquinone + n Na(+)(in) + NADH + H(+) = a ubiquinol + n Na(+)(out) + NAD(+). Functionally, NQR complex catalyzes the reduction of ubiquinone-1 to ubiquinol by two successive reactions, coupled with the transport of Na(+) ions from the cytoplasm to the periplasm. NqrA to NqrE are probably involved in the second step, the conversion of ubisemiquinone to ubiquinol. The polypeptide is Na(+)-translocating NADH-quinone reductase subunit D (Psychromonas ingrahamii (strain DSM 17664 / CCUG 51855 / 37)).